A 91-amino-acid chain; its full sequence is Cell division topological specificity factor (91 aa).

Belongs to the MinE family.

Functionally, prevents the cell division inhibition by proteins MinC and MinD at internal division sites while permitting inhibition at polar sites. This ensures cell division at the proper site by restricting the formation of a division septum at the midpoint of the long axis of the cell. The protein is Cell division topological specificity factor of Caldanaerobacter subterraneus subsp. tengcongensis (strain DSM 15242 / JCM 11007 / NBRC 100824 / MB4) (Thermoanaerobacter tengcongensis).